The following is a 349-amino-acid chain: MDSTPHRKSDHIRIVLEEDVVGKGISTGFERLMLEHCALPAVDLDAVDLGLTLWGKSLTYPWLISSMTGGTPEAKQINLFLAEVAQALGIAMGLGSQRAAIENPDLAFTYQVRSVAPDILLFANLGLVQLNYGYGLEQAQRAVDMIEADALILHLNPLQEAVQPDGDRLWSGLWSKLEALVEALEVPVIVKEVGNGISGPVAKRLQECGVGAIDVAGAGGTSWSEVEAHRQTDRQAKEVAHNFADWGLPTAWSLQQVVQNTEQILVFASGGIRSGIDGAKAIALGATLVGSAAPVLAEAKINAQRVYDHYQARLRELQIAAFCCDAANLTQLAQVPLWDRQSGQRLTKP.

7–8 lines the substrate pocket; sequence RK. FMN contacts are provided by residues Ser-65, 66–68, Ser-96, and Asn-124; that span reads SMT. A substrate-binding site is contributed by 96–98; that stretch reads SQR. Substrate is bound at residue Gln-159. Glu-160 lines the Mg(2+) pocket. FMN is bound by residues Lys-191, Thr-221, 271-273, and 292-293; these read GIR and AA.

It belongs to the IPP isomerase type 2 family. In terms of assembly, homooctamer. Dimer of tetramers. FMN serves as cofactor. Requires NADPH as cofactor. Mg(2+) is required as a cofactor.

It is found in the cytoplasm. It catalyses the reaction isopentenyl diphosphate = dimethylallyl diphosphate. In terms of biological role, involved in the biosynthesis of isoprenoids. Catalyzes the 1,3-allylic rearrangement of the homoallylic substrate isopentenyl (IPP) to its allylic isomer, dimethylallyl diphosphate (DMAPP). The chain is Isopentenyl-diphosphate delta-isomerase from Synechocystis sp. (strain ATCC 27184 / PCC 6803 / Kazusa).